Reading from the N-terminus, the 359-residue chain is Peptide chain release factor 1 (359 aa).

Q238 carries the post-translational modification N5-methylglutamine.

It belongs to the prokaryotic/mitochondrial release factor family. Post-translationally, methylated by PrmC. Methylation increases the termination efficiency of RF1.

The protein resides in the cytoplasm. In terms of biological role, peptide chain release factor 1 directs the termination of translation in response to the peptide chain termination codons UAG and UAA. The sequence is that of Peptide chain release factor 1 from Mycoplasmopsis pulmonis (strain UAB CTIP) (Mycoplasma pulmonis).